The primary structure comprises 131 residues: UPF0102 protein YraN (131 aa).

Belongs to the UPF0102 family.

The sequence is that of UPF0102 protein YraN from Salmonella typhimurium (strain LT2 / SGSC1412 / ATCC 700720).